The sequence spans 212 residues: ATP-dependent dethiobiotin synthetase BioD (212 aa).

12–17 is a binding site for ATP; sequence DCGKTF. Thr16 is a Mg(2+) binding site. The active site involves Lys33. Ser37 is a substrate binding site. ATP contacts are provided by residues Asp50, 110 to 113, and 170 to 171; these read EGAG and NC. 2 residues coordinate Mg(2+): Asp50 and Glu110.

The protein belongs to the dethiobiotin synthetase family. Homodimer. Mg(2+) is required as a cofactor.

Its subcellular location is the cytoplasm. The catalysed reaction is (7R,8S)-7,8-diammoniononanoate + CO2 + ATP = (4R,5S)-dethiobiotin + ADP + phosphate + 3 H(+). It functions in the pathway cofactor biosynthesis; biotin biosynthesis; biotin from 7,8-diaminononanoate: step 1/2. Functionally, catalyzes a mechanistically unusual reaction, the ATP-dependent insertion of CO2 between the N7 and N8 nitrogen atoms of 7,8-diaminopelargonic acid (DAPA, also called 7,8-diammoniononanoate) to form a ureido ring. In Legionella pneumophila (strain Lens), this protein is ATP-dependent dethiobiotin synthetase BioD.